The primary structure comprises 498 residues: Glutamate--tRNA ligase (498 aa).

The 'HIGH' region motif lies at 11–21 (PSPTGHLHIGN). The 'KMSKS' region signature appears at 260-264 (KLSKR). K263 is an ATP binding site.

This sequence belongs to the class-I aminoacyl-tRNA synthetase family. Glutamate--tRNA ligase type 1 subfamily. Monomer.

Its subcellular location is the cytoplasm. The catalysed reaction is tRNA(Glu) + L-glutamate + ATP = L-glutamyl-tRNA(Glu) + AMP + diphosphate. Functionally, catalyzes the attachment of glutamate to tRNA(Glu) in a two-step reaction: glutamate is first activated by ATP to form Glu-AMP and then transferred to the acceptor end of tRNA(Glu). The protein is Glutamate--tRNA ligase of Leuconostoc citreum (strain KM20).